Consider the following 710-residue polypeptide: FAST kinase domain-containing protein 2, mitochondrial (710 aa).

A phosphoserine mark is found at S126 and S140. The RAP domain occupies 634–691 (VAVLCVSRSAYCLGSSHPRGFLAMKMRHLNAMGFHVILVNNWEMDKLEMEDAVTFLKT). S708 carries the phosphoserine modification.

It belongs to the FAST kinase family. As to quaternary structure, monomer. Found in a complex with GRSF1, DDX28, DHX30 and FASTKD5. Associates with the 16S mitochondrial rRNA (16S mt-rRNA). Forms a regulatory protein-RNA complex, consisting of RCC1L, NGRN, RPUSD3, RPUSD4, TRUB2, FASTKD2 and 16S mt-rRNA. As to expression, expression detected in spleen, thymus, testis, ovary, colon, heart, smooth muscle, kidney, brain, lung, liver and white adipose tissue with highest expression in heart, smooth muscle and thyroid.

The protein resides in the mitochondrion matrix. The protein localises to the mitochondrion nucleoid. Functionally, plays an important role in assembly of the mitochondrial large ribosomal subunit. As a component of a functional protein-RNA module, consisting of RCC1L, NGRN, RPUSD3, RPUSD4, TRUB2, FASTKD2 and 16S mitochondrial ribosomal RNA (16S mt-rRNA), controls 16S mt-rRNA abundance and is required for intra-mitochondrial translation. May play a role in mitochondrial apoptosis. The polypeptide is FAST kinase domain-containing protein 2, mitochondrial (Homo sapiens (Human)).